The sequence spans 3118 residues: Laminin subunit alpha-2 (3118 aa).

A signal peptide spans 1–19; it reads MPAATAGILLLLLLGTLEG. Positions 31 to 282 constitute a Laminin N-terminal domain; the sequence is QQRGLFPAVL…SVKDISVGGM (252 aa). Residues Asn51 and Asn85 are each glycosylated (N-linked (GlcNAc...) asparagine). Cystine bridges form between Cys283-Cys292, Cys285-Cys303, Cys305-Cys314, Cys317-Cys337, Cys340-Cys349, and Cys342-Cys374. Laminin EGF-like domains are found at residues 283 to 339, 340 to 409, 410 to 464, and 465 to 513; these read CICY…ECEA, CNCH…PCQP, CHCD…DCQP, and CNCS…GCEE. Residue Asn299 is glycosylated (N-linked (GlcNAc...) asparagine). N-linked (GlcNAc...) asparagine glycosylation is found at Asn359 and Asn376. Intrachain disulfides connect Cys377-Cys386, Cys389-Cys407, Cys410-Cys422, Cys412-Cys438, Cys440-Cys449, Cys452-Cys462, Cys465-Cys478, Cys467-Cys482, Cys484-Cys493, and Cys496-Cys511. Asn466 is a glycosylation site (N-linked (GlcNAc...) asparagine). Residues 514–523 form the Laminin EGF-like 5; first part domain; it reads CFCSGVSNRC. The region spanning 527–719 is the Laminin IV type A 1 domain; it reads YWTYGNIQDM…DRRIATDVEV (193 aa). Residues 720–752 form the Laminin EGF-like 5; second part domain; the sequence is CQCPPGYSGSSCETCWPRHRRVNGTIFGGICEP. Asn742 carries an N-linked (GlcNAc...) asparagine glycan. 32 disulfides stabilise this stretch: Cys753–Cys762, Cys755–Cys769, Cys772–Cys781, Cys784–Cys800, Cys803–Cys818, Cys805–Cys828, Cys831–Cys840, Cys843–Cys858, Cys861–Cys875, Cys863–Cys882, Cys885–Cys894, Cys897–Cys911, Cys914–Cys926, Cys916–Cys933, Cys935–Cys944, Cys947–Cys960, Cys963–Cys975, Cys965–Cys981, Cys983–Cys992, Cys995–Cys1007, Cys1010–Cys1019, Cys1012–Cys1026, Cys1028–Cys1037, Cys1040–Cys1053, Cys1056–Cys1068, Cys1058–Cys1075, Cys1077–Cys1086, Cys1089–Cys1099, Cys1102–Cys1114, Cys1104–Cys1130, Cys1132–Cys1141, and Cys1144–Cys1159. Laminin EGF-like domains follow at residues 753–802, 803–860, 861–913, 914–962, 963–1009, 1010–1055, 1056–1101, and 1102–1161; these read CQCF…DCQP, CACP…SCQP, CQCN…NCQP, CRCN…GCLP, CNCN…GCIA, CDCS…GCKV, CNCS…LCTL, and CDCF…GCSS. N-linked (GlcNAc...) asparagine glycosylation occurs at Asn919. Asn1031 is a glycosylation site (N-linked (GlcNAc...) asparagine). A glycan (N-linked (GlcNAc...) asparagine) is linked at Asn1057. In terms of domain architecture, Laminin EGF-like 14; first part spans 1162-1171; that stretch reads CYCFGVTSQC. Residues 1172–1375 enclose the Laminin IV type A 2 domain; that stretch reads SEAKGLIRTW…GSPPAHLIER (204 aa). The Laminin EGF-like 14; second part domain maps to 1376–1415; it reads CDCPPGYSGLSCETCAPGFYRLRSEPGGRTPGPTLGTCVP. Intrachain disulfides connect Cys1378-Cys1387, Cys1416-Cys1425, Cys1418-Cys1432, Cys1435-Cys1444, Cys1447-Cys1462, Cys1465-Cys1480, Cys1467-Cys1490, Cys1493-Cys1502, Cys1505-Cys1520, Cys1523-Cys1535, Cys1525-Cys1542, Cys1544-Cys1553, and Cys1556-Cys1567. Laminin EGF-like domains are found at residues 1416 to 1464, 1465 to 1522, and 1523 to 1569; these read CQCN…DCQP, CACP…SCQE, and CECD…ECVF. The domain II and I stretch occupies residues 1570–2140; it reads CGDECTGLLL…NQARKQANSI (571 aa). 12 N-linked (GlcNAc...) asparagine glycosylation sites follow: Asn1593, Asn1610, Asn1696, Asn1806, Asn1897, Asn1912, Asn1916, Asn2013, Asn2024, Asn2041, Asn2122, and Asn2236. The stretch at 1662–1863 forms a coiled coil; that stretch reads QDAERTNSRA…DIKTKLPPMS (202 aa). Residues 1923–2146 adopt a coiled-coil conformation; sequence AYSNIKDYID…ANSIKVSVSS (224 aa). Laminin G-like domains follow at residues 2141–2324, 2336–2517, 2522–2706, 2759–2930, and 2929–3115; these read KVSV…CKGC, TIQF…TKGC, VYTV…IGRC, SKQF…VGTC, and TCFA…PVSC. Residues Cys2298 and Cys2324 are joined by a disulfide bond. N-linked (GlcNAc...) asparagine glycans are attached at residues Asn2356, Asn2431, and Asn2474. A disulfide bridge links Cys2491 with Cys2517. Residues Asn2547, Asn2554, and Asn2644 are each glycosylated (N-linked (GlcNAc...) asparagine). Cys2679 and Cys2706 are oxidised to a cystine. N-linked (GlcNAc...) asparagine glycosylation occurs at Asn2889. 2 disulfide bridges follow: Cys2905-Cys2930 and Cys3083-Cys3115.

Laminin is a complex glycoprotein, consisting of three different polypeptide chains (alpha, beta, gamma), which are bound to each other by disulfide bonds into a cross-shaped molecule comprising one long and three short arms with globules at each end. Alpha-2 is a subunit of laminin-2 (laminin-211 or merosin), laminin-4 (laminin-221 or S-merosin) and laminin-12 (laminin-213). Interacts with FBLN1, FBLN2 and NID2.

The protein localises to the secreted. It is found in the extracellular space. It localises to the extracellular matrix. Its subcellular location is the basement membrane. Its function is as follows. Binding to cells via a high affinity receptor, laminin is thought to mediate the attachment, migration and organization of cells into tissues during embryonic development by interacting with other extracellular matrix components. This chain is Laminin subunit alpha-2 (Lama2), found in Mus musculus (Mouse).